The chain runs to 198 residues: MKVTKADIVISAVKPEQYPDSDLPEIALAGRSNVGKSSFINKILNRKKLVRISSKPGKTQTLNFFLINEMMHFVDVPGYGYAKVSKSERAAWGKMIETYFTTRKQLDAAVLVVDLRHQPTSDDVMMYDFLKHYEIPTIIIATKADKIPKGKWQKHLKVVKETLAVEIGDEIVLFSSETGLGKEEAWKAIHKMTKTKNA.

Residues 22–195 (DLPEIALAGR…WKAIHKMTKT (174 aa)) enclose the EngB-type G domain. GTP-binding positions include 30-37 (GRSNVGKS), 57-61 (GKTQT), 75-78 (DVPG), 142-145 (TKAD), and 174-176 (FSS). Residues S37 and T59 each coordinate Mg(2+).

It belongs to the TRAFAC class TrmE-Era-EngA-EngB-Septin-like GTPase superfamily. EngB GTPase family. Mg(2+) serves as cofactor.

In terms of biological role, necessary for normal cell division and for the maintenance of normal septation. The chain is Probable GTP-binding protein EngB from Bacillus cereus (strain G9842).